Reading from the N-terminus, the 496-residue chain is Glutamate--cysteine ligase B, chloroplastic (496 aa).

The N-terminal 34 residues, 1–34 (MAVASRLAVARVAPDGGAAGRRRRRRGRPVVAVP), are a transit peptide targeting the chloroplast. A disordered region spans residues 14–53 (PDGGAAGRRRRRRGRPVVAVPTAAGRGRGRGGAVAASPPT). A compositionally biased stretch (low complexity) spans 29 to 38 (PVVAVPTAAG). Cysteines 160 and 380 form a disulfide.

Belongs to the carboxylate-amine ligase family. Glutamate--cysteine ligase type 2 subfamily. Homodimer or monomer when oxidized or reduced, respectively. Post-translationally, the Cys-160-Cys-380 disulfide bridge is known to modulate the enzyme activity according to the redox status. The oxidized form constitutes the active enzyme.

It localises to the plastid. It is found in the chloroplast. The catalysed reaction is L-cysteine + L-glutamate + ATP = gamma-L-glutamyl-L-cysteine + ADP + phosphate + H(+). It functions in the pathway sulfur metabolism; glutathione biosynthesis; glutathione from L-cysteine and L-glutamate: step 1/2. The polypeptide is Glutamate--cysteine ligase B, chloroplastic (GSH1-2) (Oryza sativa subsp. japonica (Rice)).